We begin with the raw amino-acid sequence, 239 residues long: Peptidyl-tRNA hydrolase (239 aa).

Tyr-14 is a tRNA binding site. The Proton acceptor role is filled by His-19. Positions 64, 66, and 112 each coordinate tRNA.

This sequence belongs to the PTH family. Monomer.

The protein resides in the cytoplasm. The enzyme catalyses an N-acyl-L-alpha-aminoacyl-tRNA + H2O = an N-acyl-L-amino acid + a tRNA + H(+). In terms of biological role, hydrolyzes ribosome-free peptidyl-tRNAs (with 1 or more amino acids incorporated), which drop off the ribosome during protein synthesis, or as a result of ribosome stalling. Its function is as follows. Catalyzes the release of premature peptidyl moieties from peptidyl-tRNA molecules trapped in stalled 50S ribosomal subunits, and thus maintains levels of free tRNAs and 50S ribosomes. This is Peptidyl-tRNA hydrolase from Rhizobium meliloti (strain 1021) (Ensifer meliloti).